The sequence spans 419 residues: Gamma-glutamyl phosphate reductase (419 aa).

The protein belongs to the gamma-glutamyl phosphate reductase family.

It is found in the cytoplasm. The catalysed reaction is L-glutamate 5-semialdehyde + phosphate + NADP(+) = L-glutamyl 5-phosphate + NADPH + H(+). It participates in amino-acid biosynthesis; L-proline biosynthesis; L-glutamate 5-semialdehyde from L-glutamate: step 2/2. Catalyzes the NADPH-dependent reduction of L-glutamate 5-phosphate into L-glutamate 5-semialdehyde and phosphate. The product spontaneously undergoes cyclization to form 1-pyrroline-5-carboxylate. In Caulobacter sp. (strain K31), this protein is Gamma-glutamyl phosphate reductase.